Consider the following 246-residue polypeptide: Small ribosomal subunit protein uS2 (246 aa).

Belongs to the universal ribosomal protein uS2 family. As to quaternary structure, component of the small ribosomal subunit. Mature ribosomes consist of a small (40S) and a large (60S) subunit. The 40S subunit contains about 33 different proteins and 1 molecule of RNA (18S). The 60S subunit contains about 49 different proteins and 3 molecules of RNA (25S, 5.8S and 5S). Interacts with ribosomal protein S21.

It localises to the cytoplasm. Functionally, required for the assembly and/or stability of the 40S ribosomal subunit. Required for the processing of the 20S rRNA-precursor to mature 18S rRNA in a late step of the maturation of 40S ribosomal subunits. The chain is Small ribosomal subunit protein uS2 from Leishmania infantum.